The chain runs to 913 residues: MSQAPLVLVDGSSYLYRAFHALPPLTTSTGKPTGAVKGVLNMLLSLRKQYPDSPFAVVFDAKGPTFRDELFAEYKANRPSMPDDLRVQVEPLHASVRALGLPLLCVEGVEADDVIGTLARSSAAADRPVVISTGDKDMAQLVDGHITLVNTMTGSRLDVDGVKEKFGVGPELIIDFLALMGDKVDNIPGVPGVGEKTALGLLTGVGGGLEVLYASLDKVPELPIRGAKGLPAKLEENREQAFLSYQLATIKTDVELDVEIDKLYPGEPQREALIALYRELEFKNWLDDLLREAKEAGENGEAETPIQAEVDYDVVLDQAGFDAWLKKLEEAELIAFDTETTSIDAQQAQVVGVSFAVKEGEAAYVPLAHSYMGVPEQLDRDAVLRALKPLLEDPKKLKVGQHAKYDINVLANASTPIALRGVAYDTMLESYVLDSTATRHDMDSLALKYLGHSTIRFEDIAGKGAKQLTFDQIAIEQAGPYAAEDADVTLRLHQALWQKLEAIPSLARVLTDIEMPLVPVLARIERNGALVDANLLGIQSRELGEKMVALERQAYDLAGQEFNLGSPKQLGAILYDKLGLPVLSKTATGQPSTAEAVLAELAEQDFELPKVIMQYRSMSKLKSTYTDRLPEQINPRTGRIHTSYHQAVAATGRLSSSDPNLQNIPIRTAEGRRIRQAFVAPQGYKLLAADYSQIELRIMAHLAKDDGLLDAFRHDLDVHRATAAEVFGVPLEDVSGDQRRSAKAINFGLIYGMSAFGLAKQIGVERKEAQAYIDRYFARYPGVLAYMERTRAQAAEQGFVETLFGRRLYLPEIHSKNGAMRKAAERTAINAPMQGTAADIMKRAMVAVDNWLQESGLDARVILQVHDELVLEVREDLVEQVCEGIRPLMSGAATLDVPLVVEAGVGSNWDEAH.

In terms of domain architecture, 5'-3' exonuclease spans 1–305; that stretch reads MSQAPLVLVD…AGENGEAETP (305 aa). The 3'-5' exonuclease domain maps to 306–501; that stretch reads IQAEVDYDVV…LHQALWQKLE (196 aa). The tract at residues 505–913 is polymerase; the sequence is SLARVLTDIE…GVGSNWDEAH (409 aa).

It belongs to the DNA polymerase type-A family. Single-chain monomer with multiple functions.

The catalysed reaction is DNA(n) + a 2'-deoxyribonucleoside 5'-triphosphate = DNA(n+1) + diphosphate. In addition to polymerase activity, this DNA polymerase exhibits 3'-5' and 5'-3' exonuclease activity. The protein is DNA polymerase I (polA) of Pseudomonas aeruginosa (strain ATCC 15692 / DSM 22644 / CIP 104116 / JCM 14847 / LMG 12228 / 1C / PRS 101 / PAO1).